Consider the following 165-residue polypeptide: uncharacterized protein (165 aa).

Residues 1–36 (MTRLCLPRPEAREDPIPVPPRGLGAGEGSGSPVRPP) form a disordered region. The chain crosses the membrane as a helical span at residues 135 to 155 (LLLLMGLGPLLRACGMPLTLL).

It localises to the membrane. This is an uncharacterized protein from Homo sapiens (Human).